The following is a 26-amino-acid chain: Hemocyanin subunit B (26 aa).

This sequence belongs to the tyrosinase family. Hemocyanin subfamily. Hemolymph.

Its subcellular location is the secreted. It is found in the extracellular space. Hemocyanins are copper-containing oxygen carriers occurring freely dissolved in the hemolymph of many mollusks and arthropods. The chain is Hemocyanin subunit B from Carcinus maenas (Common shore crab).